Here is a 769-residue protein sequence, read N- to C-terminus: Serine protease HtrA-like (769 aa).

Over residues 1 to 20 (MDIGKKHVIPKSQYRRKRRE) the composition is skewed to basic residues. The interval 1 to 390 (MDIGKKHVIP…ATSKLNKGRA (390 aa)) is disordered. Composition is skewed to basic and acidic residues over residues 21–64 (FFHN…ERFK) and 71–108 (LEQR…DVSK). Residues 126 to 137 (YEQNSEATLSTK) are compositionally biased toward polar residues. The span at 138–186 (STDKVESSDMRKLSPDKNKVGHEEQHVLSKPSEHDKETRIDFESSRTDS) shows a compositional bias: basic and acidic residues. Polar residues-rich tracts occupy residues 202-221 (GNES…NTVP) and 247-262 (QQSQ…YGDS). Over residues 264–295 (QNDKSNHENDLSHHTPSKSDDKDNVMREDHIV) the composition is skewed to basic and acidic residues. Residues 298 to 308 (NPDNDINTPSL) are compositionally biased toward polar residues. Residues 310-330 (KIDDDRKLDEKIHVEDKHKQN) are compositionally biased toward basic and acidic residues. The segment covering 331–347 (ADSSETVGYQSQSSVSH) has biased composition (polar residues). A compositionally biased stretch (basic and acidic residues) spans 348–362 (RSTEKRNMAINDHHK). The span at 366-390 (QKLNTKTSANNNQKKATSKLNKGRA) shows a compositional bias: polar residues. Residues 410 to 430 (LVILMGIIILIVILNAIFNNV) form a helical membrane-spanning segment. Residues His-504, Asp-534, and Ser-619 each act as charge relay system in the active site. One can recognise a PDZ domain in the interval 680–733 (IASLNSFERQAVKLPGKVKNGVVVDQVDNNGLADQSSLKKGDVITELDGKLLED).

It belongs to the peptidase S1C family.

The protein localises to the cell membrane. The sequence is that of Serine protease HtrA-like from Staphylococcus aureus (strain bovine RF122 / ET3-1).